Consider the following 1745-residue polypeptide: Tight junction protein 1 (1745 aa).

Positions 23–110 constitute a PDZ 1 domain; it reads TVTLHRAPGF…NAKITIRRKK (88 aa). Residues 102–112 show a composition bias toward basic residues; sequence AKITIRRKKKV. The disordered stretch occupies residues 102–189; it reads AKITIRRKKK…QPAKPTKVTL (88 aa). A compositionally biased stretch (acidic residues) spans 123-136; that stretch reads PVSDNEDDSYDEEV. Position 125 is a phosphoserine (S125). Phosphotyrosine is present on Y132. Basic and acidic residues predominate over residues 149–175; that stretch reads RRSEKSWARDRSASRERSLSPRSDRRS. 3 positions are modified to phosphoserine: S175, S178, and S179. The residue at position 185 (T185) is a Phosphothreonine. In terms of domain architecture, PDZ 2 spans 186 to 264; that stretch reads KVTLVKSRKN…KLKMVVQRDE (79 aa). A phosphoserine mark is found at S212 and S241. Position 267 is a phosphothreonine (T267). 13 positions are modified to phosphoserine: S275, S277, S280, S284, S290, S294, S297, S300, S323, S329, S334, S337, and S353. A disordered region spans residues 296 to 364; it reads ASDHSGRSHD…PVKHVDDHPP (69 aa). Residues 299 to 308 show a composition bias toward basic and acidic residues; it reads HSGRSHDRPP. Residues 325 to 338 are compositionally biased toward polar residues; it reads HSTQSPQQPSNGSL. T354 bears the Phosphothreonine mark. In terms of domain architecture, PDZ 3 spans 421 to 502; that stretch reads SMKLVKFRKG…GEEVTILAQK (82 aa). Residues 516-584 enclose the SH3 domain; that stretch reads GDSFYIRTHF…PNKNRAEQLA (69 aa). One can recognise a Guanylate kinase-like domain in the interval 610 to 791; that stretch reads SKRNLRKSRE…WYGALKEAIQ (182 aa). 2 positions are modified to phosphoserine: S617 and S622. An occludin (OCLN)-binding region region spans residues 633 to 876; that stretch reads YERVVLREAG…GTPPESAITR (244 aa). Residue T809 is modified to Phosphothreonine. A phosphoserine mark is found at S810 and S821. Phosphotyrosine is present on Y822. A phosphoserine mark is found at S824, S828, and S837. 2 disordered regions span residues 825-944 and 956-1042; these read APGS…SASA and LEEP…YEPQ. Phosphothreonine is present on residues T846, T848, T854, T861, and T868. Positions 879–892 are enriched in basic and acidic residues; the sequence is EPVREDSSGMHHEN. The segment covering 893–906 has biased composition (low complexity); sequence QTYPPYSPQAQPQA. Residue S912 is modified to Phosphoserine. The span at 998-1014 shows a compositional bias: basic and acidic residues; that stretch reads DPAKVYRKEPYSEEMMR. S1071 carries the post-translational modification Phosphoserine. Residues 1090–1586 are disordered; that stretch reads QWSYYDDKQP…STQPPEFDSG (497 aa). Basic and acidic residues predominate over residues 1106 to 1124; that stretch reads ENQHPRDLDSRQHPEEASE. S1138 carries the phosphoserine modification. Y1139 and Y1164 each carry phosphotyrosine. Residues 1150–1370 form an actin-binding region (ABR) region; it reads RTSTLRHEEQ…FDRRSFESKP (221 aa). Composition is skewed to basic and acidic residues over residues 1268–1285 and 1335–1346; these read KMFE…KDVN and PPEDIVRSNHYD. Position 1353 is a phosphotyrosine (Y1353). A Phosphoserine modification is found at S1365. Over residues 1388–1399 the composition is skewed to low complexity; that stretch reads SQSQPNFSSYSS. The segment covering 1401–1418 has biased composition (basic and acidic residues); that stretch reads GKPETDAVDRSFSEKRYD. S1411 bears the Phosphoserine mark. Low complexity predominate over residues 1431 to 1445; sequence SQYSQPAPPLSSSSL. 2 stretches are compositionally biased toward polar residues: residues 1455 to 1468 and 1510 to 1519; these read EGNS…NSYM and AEQTQKTITP. A compositionally biased stretch (basic and acidic residues) spans 1535-1544; that stretch reads PFERKFESPK. At S1542 the chain carries Phosphoserine. Residues 1561-1580 are compositionally biased toward polar residues; sequence SSKTPTSPKTLMKAHSSTQP. S1614 carries the post-translational modification Phosphoserine. Residues 1631–1745 enclose the ZU5 domain; that stretch reads ATARGIFNSN…NCVSVLIDHF (115 aa).

It belongs to the MAGUK family. As to quaternary structure, homodimer. Forms heterodimers TJP3. Forms a heterodimer (via PDZ2 domain) with TJP2/ZO2 (via PDZ2 domain). Interacts with OCLN, CALM, claudins, CGN/cingulin, CXADR, GJD3 and UBN1. Interacts (via ZU5 domain) with CDC42BPB. Interacts (via PDZ domain) with GJA1. Interacts (via PDZ domains) with ANKRD2. Interacts with POPDC1 (via the C-terminus cytoplasmic tail). Interacts with GJA12 and KIRREL1. Interacts with HSPA4. Interacts (via ZU5 domain) with MYZAP. Interacts with DLL1. Interacts with USP53 (via the C-terminal region). Interacts with DNMBP (via C-terminal domain); required for the apical cell-cell junction localization of DNMBP. Interacts with SPEF1. Interacts (via N-terminus) with CTNNA1. Interacts with CLDN18. Interacts with CLDN16 (via TRV motif); this is a prerequisite for anchoring of CLDN16 at the tight junction. Interacts with PKP1; the interaction facilitates TJP1/ZO-1 localization to the plasma membrane. Interacts with PATJ (via PDZ1-6 domains); the interaction is required for attachment and extension of TJP1/ZO1 condensates along the apical cell interface. Phosphorylated at tyrosine redidues in response to epidermal growth factor (EGF). This response is dependent on an intact actin microfilament system. Dephosphorylated by PTPRJ. Expressed between ameloblasts, at ameloblast-ameloblast junctions and in the stratum intermedium during pre-secretory and secretory stages of tooth development (at protein level).

The protein localises to the cell membrane. Its subcellular location is the cell junction. It localises to the tight junction. It is found in the gap junction. The protein resides in the cytoplasm. The protein localises to the myofibril. Its subcellular location is the sarcomere. It localises to the i band. Functionally, tjp1, TjpP2, and Tjp3 are closely related scaffolding proteins that link tight junction (TJ) transmembrane proteins such as claudins, junctional adhesion molecules, and occludin to the actin cytoskeleton. Forms a multistranded TJP1/ZO1 condensate which elongates to form a tight junction belt, the belt is anchored at the apical cell membrane via interaction with PATJ. The tight junction acts to limit movement of substances through the paracellular space and as a boundary between the compositionally distinct apical and basolateral plasma membrane domains of epithelial and endothelial cells. Necessary for lumenogenesis, and particularly efficient epithelial polarization and barrier formation. Plays a role in the regulation of cell migration by targeting Cdc42bpb to the leading edge of migrating cells. Plays an important role in podosome formation and associated function, thus regulating cell adhesion and matrix remodeling. With Tjp2 and TJjp3, participates in the junctional retention and stability of the transcription factor Dbpa, but is not involved in its shuttling to the nucleus. May play a role in mediating cell morphology changes during ameloblast differentiation via its role in tight junctions. The protein is Tight junction protein 1 of Mus musculus (Mouse).